An 88-amino-acid chain; its full sequence is Cell division topological specificity factor (88 aa).

The protein belongs to the MinE family.

In terms of biological role, prevents the cell division inhibition by proteins MinC and MinD at internal division sites while permitting inhibition at polar sites. This ensures cell division at the proper site by restricting the formation of a division septum at the midpoint of the long axis of the cell. In Escherichia coli (strain SMS-3-5 / SECEC), this protein is Cell division topological specificity factor.